A 410-amino-acid polypeptide reads, in one-letter code: Tryptophan synthase beta chain (410 aa).

Lysine 98 carries the N6-(pyridoxal phosphate)lysine modification.

It belongs to the TrpB family. Tetramer of two alpha and two beta chains. Pyridoxal 5'-phosphate serves as cofactor.

The enzyme catalyses (1S,2R)-1-C-(indol-3-yl)glycerol 3-phosphate + L-serine = D-glyceraldehyde 3-phosphate + L-tryptophan + H2O. It functions in the pathway amino-acid biosynthesis; L-tryptophan biosynthesis; L-tryptophan from chorismate: step 5/5. Functionally, the beta subunit is responsible for the synthesis of L-tryptophan from indole and L-serine. This Roseobacter denitrificans (strain ATCC 33942 / OCh 114) (Erythrobacter sp. (strain OCh 114)) protein is Tryptophan synthase beta chain.